Consider the following 231-residue polypeptide: WAP four-disulfide core domain protein 3 (231 aa).

A signal peptide spans 1–24 (MMLSCLFLLKALLALGSLESWITA). WAP domains lie at 26–68 (EHAK…CRDI), 69–114 (PKGR…VVPI), 119–162 (LAEF…LGDI), and 163–207 (EGGR…VPPV). 16 cysteine pairs are disulfide-bonded: C33-C57, C40-C61, C44-C56, C50-C65, C76-C102, C85-C106, C89-C101, C95-C110, C126-C150, C133-C154, C137-C149, C143-C158, C170-C195, C178-C199, C182-C194, and C188-C203. The N-linked (GlcNAc...) asparagine glycan is linked to N107. N-linked (GlcNAc...) asparagine glycosylation is present at N217.

In terms of tissue distribution, ubiquitously expressed.

Its subcellular location is the secreted. The sequence is that of WAP four-disulfide core domain protein 3 (WFDC3) from Homo sapiens (Human).